The sequence spans 564 residues: Proline--tRNA ligase 1 (564 aa).

This sequence belongs to the class-II aminoacyl-tRNA synthetase family. ProS type 1 subfamily. As to quaternary structure, homodimer.

The protein localises to the cytoplasm. It carries out the reaction tRNA(Pro) + L-proline + ATP = L-prolyl-tRNA(Pro) + AMP + diphosphate. Its function is as follows. Catalyzes the attachment of proline to tRNA(Pro) in a two-step reaction: proline is first activated by ATP to form Pro-AMP and then transferred to the acceptor end of tRNA(Pro). As ProRS can inadvertently accommodate and process non-cognate amino acids such as alanine and cysteine, to avoid such errors it has two additional distinct editing activities against alanine. One activity is designated as 'pretransfer' editing and involves the tRNA(Pro)-independent hydrolysis of activated Ala-AMP. The other activity is designated 'posttransfer' editing and involves deacylation of mischarged Ala-tRNA(Pro). The misacylated Cys-tRNA(Pro) is not edited by ProRS. In Streptomyces avermitilis (strain ATCC 31267 / DSM 46492 / JCM 5070 / NBRC 14893 / NCIMB 12804 / NRRL 8165 / MA-4680), this protein is Proline--tRNA ligase 1.